Consider the following 351-residue polypeptide: D-alanine--D-alanine ligase (351 aa).

In terms of domain architecture, ATP-grasp spans 135 to 344; sequence KMAFAQAGLP…FAELVDQLIQ (210 aa). 171-226 lines the ATP pocket; the sequence is EQRLGYPCFVKPANLGSSVGIAKVRSRSELEKALDSAASYDRRIVIETGVKAREVE. Mg(2+) contacts are provided by Asp-297, Glu-311, and Asn-313.

Belongs to the D-alanine--D-alanine ligase family. Mg(2+) is required as a cofactor. It depends on Mn(2+) as a cofactor.

It localises to the cytoplasm. The enzyme catalyses 2 D-alanine + ATP = D-alanyl-D-alanine + ADP + phosphate + H(+). Its pathway is cell wall biogenesis; peptidoglycan biosynthesis. In terms of biological role, cell wall formation. The chain is D-alanine--D-alanine ligase from Rippkaea orientalis (strain PCC 8801 / RF-1) (Cyanothece sp. (strain PCC 8801)).